We begin with the raw amino-acid sequence, 289 residues long: Bis(5'-nucleosyl)-tetraphosphatase, symmetrical (289 aa).

It belongs to the Ap4A hydrolase family.

It catalyses the reaction P(1),P(4)-bis(5'-adenosyl) tetraphosphate + H2O = 2 ADP + 2 H(+). In terms of biological role, hydrolyzes diadenosine 5',5'''-P1,P4-tetraphosphate to yield ADP. The polypeptide is Bis(5'-nucleosyl)-tetraphosphatase, symmetrical (Yersinia pseudotuberculosis serotype O:1b (strain IP 31758)).